Here is a 150-residue protein sequence, read N- to C-terminus: Probable histone H2A.5 (150 aa).

The span at 1-12 (MESSQATTKPTR) shows a compositional bias: low complexity. Disordered stretches follow at residues 1-28 (MESSQATTKPTRGAGGRKGGDRKKSVSK) and 130-150 (KSTASSSQAEKASATKSPKKA). Polar residues predominate over residues 131–150 (STASSSQAEKASATKSPKKA). Residue Ser146 is modified to Phosphoserine. Positions 146–149 (SPKK) match the SPKK motif motif.

Belongs to the histone H2A family. As to quaternary structure, the nucleosome is a histone octamer containing two molecules each of H2A, H2B, H3 and H4 assembled in one H3-H4 heterotetramer and two H2A-H2B heterodimers. The octamer wraps approximately 147 bp of DNA. Not ubiquitinated.

The protein localises to the nucleus. It localises to the chromosome. Its function is as follows. Core component of nucleosome. Nucleosomes wrap and compact DNA into chromatin, limiting DNA accessibility to the cellular machineries which require DNA as a template. Histones thereby play a central role in transcription regulation, DNA repair, DNA replication and chromosomal stability. DNA accessibility is regulated via a complex set of post-translational modifications of histones, also called histone code, and nucleosome remodeling. This is Probable histone H2A.5 from Arabidopsis thaliana (Mouse-ear cress).